Here is a 484-residue protein sequence, read N- to C-terminus: Protein nucleotidyltransferase YdiU (484 aa).

The ATP site is built by G81, G83, R84, K103, D115, G116, R166, and R173. Residue D244 is the Proton acceptor of the active site. Mg(2+)-binding residues include N245 and D254. D254 contributes to the ATP binding site.

Belongs to the SELO family. Mg(2+) serves as cofactor. Requires Mn(2+) as cofactor.

The catalysed reaction is L-seryl-[protein] + ATP = 3-O-(5'-adenylyl)-L-seryl-[protein] + diphosphate. It catalyses the reaction L-threonyl-[protein] + ATP = 3-O-(5'-adenylyl)-L-threonyl-[protein] + diphosphate. The enzyme catalyses L-tyrosyl-[protein] + ATP = O-(5'-adenylyl)-L-tyrosyl-[protein] + diphosphate. It carries out the reaction L-histidyl-[protein] + UTP = N(tele)-(5'-uridylyl)-L-histidyl-[protein] + diphosphate. The catalysed reaction is L-seryl-[protein] + UTP = O-(5'-uridylyl)-L-seryl-[protein] + diphosphate. It catalyses the reaction L-tyrosyl-[protein] + UTP = O-(5'-uridylyl)-L-tyrosyl-[protein] + diphosphate. In terms of biological role, nucleotidyltransferase involved in the post-translational modification of proteins. It can catalyze the addition of adenosine monophosphate (AMP) or uridine monophosphate (UMP) to a protein, resulting in modifications known as AMPylation and UMPylation. This is Protein nucleotidyltransferase YdiU from Shewanella putrefaciens (strain CN-32 / ATCC BAA-453).